Here is a 364-residue protein sequence, read N- to C-terminus: Tyrosine--tRNA ligase (364 aa).

Positions 41, 167, 171, 174, and 189 each coordinate L-tyrosine. The 'KMSKS' region motif lies at 238–242 (KMSKS). Position 241 (Lys241) interacts with ATP.

Belongs to the class-I aminoacyl-tRNA synthetase family. TyrS type 4 subfamily. In terms of assembly, homodimer.

It localises to the cytoplasm. It carries out the reaction tRNA(Tyr) + L-tyrosine + ATP = L-tyrosyl-tRNA(Tyr) + AMP + diphosphate + H(+). Functionally, catalyzes the attachment of tyrosine to tRNA(Tyr) in a two-step reaction: tyrosine is first activated by ATP to form Tyr-AMP and then transferred to the acceptor end of tRNA(Tyr). This is Tyrosine--tRNA ligase from Sulfurisphaera tokodaii (strain DSM 16993 / JCM 10545 / NBRC 100140 / 7) (Sulfolobus tokodaii).